Here is a 189-residue protein sequence, read N- to C-terminus: Potassium-transporting ATPase KdpC subunit (189 aa).

The chain crosses the membrane as a helical span at residues Pro-6–Val-26.

Belongs to the KdpC family. As to quaternary structure, the system is composed of three essential subunits: KdpA, KdpB and KdpC.

The protein resides in the cell inner membrane. Functionally, part of the high-affinity ATP-driven potassium transport (or Kdp) system, which catalyzes the hydrolysis of ATP coupled with the electrogenic transport of potassium into the cytoplasm. This subunit acts as a catalytic chaperone that increases the ATP-binding affinity of the ATP-hydrolyzing subunit KdpB by the formation of a transient KdpB/KdpC/ATP ternary complex. This Geotalea uraniireducens (strain Rf4) (Geobacter uraniireducens) protein is Potassium-transporting ATPase KdpC subunit.